Reading from the N-terminus, the 166-residue chain is Protein-export protein SecB (166 aa).

Belongs to the SecB family. As to quaternary structure, homotetramer, a dimer of dimers. One homotetramer interacts with 1 SecA dimer.

It is found in the cytoplasm. Its function is as follows. One of the proteins required for the normal export of preproteins out of the cell cytoplasm. It is a molecular chaperone that binds to a subset of precursor proteins, maintaining them in a translocation-competent state. It also specifically binds to its receptor SecA. In Cereibacter sphaeroides (strain ATCC 17029 / ATH 2.4.9) (Rhodobacter sphaeroides), this protein is Protein-export protein SecB.